The primary structure comprises 471 residues: uncharacterized protein (471 aa).

12 consecutive transmembrane segments (helical) span residues 48 to 68 (FISA…FTIV), 85 to 105 (LSGV…YPML), 123 to 140 (YTMS…YALA), 145 to 165 (SVAL…MFLY), 186 to 206 (VVNS…GGLM), 223 to 243 (SGNW…FACF), 277 to 297 (FVGC…YFLL), 320 to 340 (GNFL…FSYL), 349 to 369 (IILL…TIHY), 379 to 399 (FIIY…SVSL), 414 to 434 (VAVQ…GGAF), and 440 to 460 (VVFF…LLII).

The protein belongs to the major facilitator superfamily.

It localises to the golgi apparatus. The protein localises to the membrane. This is an uncharacterized protein from Schizosaccharomyces pombe (strain 972 / ATCC 24843) (Fission yeast).